A 625-amino-acid chain; its full sequence is Branchpoint-bridging protein (625 aa).

A compositionally biased stretch (polar residues) spans 1-16 (MSWRSNAQRTGMNAQP). 2 disordered regions span residues 1 to 154 (MSWR…AIGA) and 177 to 206 (LRSG…RTNT). The span at 22–31 (RWGGAGGAGE) shows a compositional bias: gly residues. Composition is skewed to low complexity over residues 32 to 61 (GPSS…SQPY), 70 to 91 (SSSS…AVAA), and 110 to 130 (SYAA…GADA). Residues 177–190 (LRSGDFVPPDRERS) show a composition bias toward basic and acidic residues. The KH domain maps to 253 to 330 (YLPIKEFPEI…ASVKKCIKLI (78 aa)). CCHC-type zinc fingers lie at residues 368 to 385 (QLCK…ECPE) and 393 to 410 (IICH…DCTQ). Residues 466–533 (GPDGKKIPPW…HAYHQQQQAY (68 aa)) are disordered. A compositionally biased stretch (gly residues) spans 488-503 (APRGGDAGRGGWGHRG). The segment covering 516 to 533 (QHQQQQHPHAYHQQQQAY) has biased composition (low complexity).

This sequence belongs to the BBP/SF1 family.

It is found in the nucleus. Necessary for the splicing of pre-mRNA. Has a role in the recognition of the branch site (5'-UACUAAC-3'), the pyrimidine tract and the 3'-splice site at the 3'-end of introns. This is Branchpoint-bridging protein (BBP) from Mycosarcoma maydis (Corn smut fungus).